A 297-amino-acid chain; its full sequence is Phosphoribosylaminoimidazole-succinocarboxamide synthase (297 aa).

This sequence belongs to the SAICAR synthetase family.

The catalysed reaction is 5-amino-1-(5-phospho-D-ribosyl)imidazole-4-carboxylate + L-aspartate + ATP = (2S)-2-[5-amino-1-(5-phospho-beta-D-ribosyl)imidazole-4-carboxamido]succinate + ADP + phosphate + 2 H(+). The protein operates within purine metabolism; IMP biosynthesis via de novo pathway; 5-amino-1-(5-phospho-D-ribosyl)imidazole-4-carboxamide from 5-amino-1-(5-phospho-D-ribosyl)imidazole-4-carboxylate: step 1/2. This Mycobacterium ulcerans (strain Agy99) protein is Phosphoribosylaminoimidazole-succinocarboxamide synthase.